Here is a 125-residue protein sequence, read N- to C-terminus: Large ribosomal subunit protein uL30 (125 aa).

The segment at 1–61 is large ribosomal subunit protein uL30; the sequence is MSKLKVKLLR…HLVGVAYRID (61 aa). The tract at residues 62-125 is unknown; it reads FSGDIPTVER…KNWKGEEVEL (64 aa).

Belongs to the universal ribosomal protein uL30 family. In terms of assembly, part of the 50S ribosomal subunit.

The protein is Large ribosomal subunit protein uL30 of Aquifex aeolicus (strain VF5).